Consider the following 481-residue polypeptide: Glutamyl-tRNA(Gln) amidotransferase subunit A (481 aa).

Residues lysine 74 and serine 149 each act as charge relay system in the active site. Catalysis depends on serine 173, which acts as the Acyl-ester intermediate.

The protein belongs to the amidase family. GatA subfamily. As to quaternary structure, heterotrimer of A, B and C subunits.

It carries out the reaction L-glutamyl-tRNA(Gln) + L-glutamine + ATP + H2O = L-glutaminyl-tRNA(Gln) + L-glutamate + ADP + phosphate + H(+). Functionally, allows the formation of correctly charged Gln-tRNA(Gln) through the transamidation of misacylated Glu-tRNA(Gln) in organisms which lack glutaminyl-tRNA synthetase. The reaction takes place in the presence of glutamine and ATP through an activated gamma-phospho-Glu-tRNA(Gln). This chain is Glutamyl-tRNA(Gln) amidotransferase subunit A, found in Francisella tularensis subsp. tularensis (strain WY96-3418).